A 463-amino-acid polypeptide reads, in one-letter code: Asparagine--tRNA ligase (463 aa).

This sequence belongs to the class-II aminoacyl-tRNA synthetase family. Homodimer.

The protein resides in the cytoplasm. The catalysed reaction is tRNA(Asn) + L-asparagine + ATP = L-asparaginyl-tRNA(Asn) + AMP + diphosphate + H(+). This is Asparagine--tRNA ligase from Bacillus cytotoxicus (strain DSM 22905 / CIP 110041 / 391-98 / NVH 391-98).